Reading from the N-terminus, the 798-residue chain is uncharacterized protein (798 aa).

The segment covering M1–S13 has biased composition (low complexity). A chloroplast-targeting transit peptide spans M1 to R58. 3 disordered regions span residues M1–A99, A135–T158, and T417–S473. Positions V35 to F55 are enriched in polar residues. The segment covering V57–L79 has biased composition (basic and acidic residues). The span at K137–A146 shows a compositional bias: basic residues. Residues A462–S473 show a composition bias toward low complexity. A coiled-coil region spans residues R578–D658. The interval D749–D798 is disordered. S762 is modified (phosphoserine). The segment covering K789 to D798 has biased composition (basic and acidic residues).

It localises to the plastid. Its subcellular location is the chloroplast. This is an uncharacterized protein from Arabidopsis thaliana (Mouse-ear cress).